The sequence spans 142 residues: Large ribosomal subunit protein uL13 (142 aa).

The protein belongs to the universal ribosomal protein uL13 family. Part of the 50S ribosomal subunit.

Its function is as follows. This protein is one of the early assembly proteins of the 50S ribosomal subunit, although it is not seen to bind rRNA by itself. It is important during the early stages of 50S assembly. The polypeptide is Large ribosomal subunit protein uL13 (Aliivibrio fischeri (strain ATCC 700601 / ES114) (Vibrio fischeri)).